A 232-amino-acid chain; its full sequence is Ornithine carbamoyltransferase (232 aa).

Residues Q15, R39, and 66-69 (HPTQ) contribute to the carbamoyl phosphate site. Residues N99, D163, and 167–168 (SM) each bind L-ornithine. Residues 204–207 (HCLP) and T232 contribute to the carbamoyl phosphate site.

Belongs to the aspartate/ornithine carbamoyltransferase superfamily. OTCase family.

The protein resides in the cytoplasm. It catalyses the reaction carbamoyl phosphate + L-ornithine = L-citrulline + phosphate + H(+). Its pathway is amino-acid biosynthesis; L-arginine biosynthesis; L-arginine from L-ornithine and carbamoyl phosphate: step 1/3. Its function is as follows. Reversibly catalyzes the transfer of the carbamoyl group from carbamoyl phosphate (CP) to the N(epsilon) atom of ornithine (ORN) to produce L-citrulline. The chain is Ornithine carbamoyltransferase (argF) from Neisseria sicca.